The sequence spans 445 residues: UPF0210 protein SSU05_0296 (445 aa).

Belongs to the UPF0210 family. Homodimer.

This chain is UPF0210 protein SSU05_0296, found in Streptococcus suis (strain 05ZYH33).